The following is a 1269-amino-acid chain: DNA-directed RNA polymerase subunit beta (1269 aa).

Belongs to the RNA polymerase beta chain family. As to quaternary structure, the RNAP catalytic core consists of 2 alpha, 1 beta, 1 beta' and 1 omega subunit. When a sigma factor is associated with the core the holoenzyme is formed, which can initiate transcription.

It catalyses the reaction RNA(n) + a ribonucleoside 5'-triphosphate = RNA(n+1) + diphosphate. In terms of biological role, DNA-dependent RNA polymerase catalyzes the transcription of DNA into RNA using the four ribonucleoside triphosphates as substrates. The protein is DNA-directed RNA polymerase subunit beta of Porphyromonas gingivalis (strain ATCC BAA-308 / W83).